Consider the following 119-residue polypeptide: MAFKDTGKTPVEPEVAIHRIRITLTSRNVKSLEKVCADLIRGAKEKNLKVKGPVRMPTKTLRITTRKTPCGEGSKTWDRFQMRIHKRLIDLHSPSEIVKQITSISIEPGVEVEVTIADA.

The residue at position 2 (Ala2) is an N-acetylalanine. Lys4 participates in a covalent cross-link: Glycyl lysine isopeptide (Lys-Gly) (interchain with G-Cter in ubiquitin). At Lys8 the chain carries N6-succinyllysine; alternate. A Glycyl lysine isopeptide (Lys-Gly) (interchain with G-Cter in ubiquitin); alternate cross-link involves residue Lys8. A Phosphothreonine modification is found at Thr9. An N6-acetyllysine mark is found at Lys34 and Lys75. Ser93 is modified (phosphoserine).

The protein belongs to the universal ribosomal protein uS10 family. Component of the 40S small ribosomal subunit. Post-translationally, polyubiquitinated by ZNF598 via 'Lys-63'-linked ubiquitin chains when a ribosome has stalled, initiating the ribosome quality control (RQC) pathway to degrade the potentially detrimental aberrant nascent polypeptide. Deubiquitinated by OTUD3 and USP21, antagonizing ZNF598 activity. In terms of processing, ufmylated by UFL1.

Its subcellular location is the cytoplasm. Functionally, component of the small ribosomal subunit. The ribosome is a large ribonucleoprotein complex responsible for the synthesis of proteins in the cell. This chain is Small ribosomal subunit protein uS10 (Rps20), found in Rattus norvegicus (Rat).